We begin with the raw amino-acid sequence, 159 residues long: SsrA-binding protein (159 aa).

Belongs to the SmpB family.

Its subcellular location is the cytoplasm. Its function is as follows. Required for rescue of stalled ribosomes mediated by trans-translation. Binds to transfer-messenger RNA (tmRNA), required for stable association of tmRNA with ribosomes. tmRNA and SmpB together mimic tRNA shape, replacing the anticodon stem-loop with SmpB. tmRNA is encoded by the ssrA gene; the 2 termini fold to resemble tRNA(Ala) and it encodes a 'tag peptide', a short internal open reading frame. During trans-translation Ala-aminoacylated tmRNA acts like a tRNA, entering the A-site of stalled ribosomes, displacing the stalled mRNA. The ribosome then switches to translate the ORF on the tmRNA; the nascent peptide is terminated with the 'tag peptide' encoded by the tmRNA and targeted for degradation. The ribosome is freed to recommence translation, which seems to be the essential function of trans-translation. This is SsrA-binding protein from Frankia casuarinae (strain DSM 45818 / CECT 9043 / HFP020203 / CcI3).